Here is a 347-residue protein sequence, read N- to C-terminus: Dihydroorotase (347 aa).

Zn(2+) is bound by residues H17 and H19. Residues 19 to 21 (HLR) and N45 contribute to the substrate site. 3 residues coordinate Zn(2+): K103, H140, and H178. K103 carries the post-translational modification N6-carboxylysine. H140 provides a ligand contact to substrate. L223 contacts substrate. D251 provides a ligand contact to Zn(2+). Residue D251 is part of the active site. The substrate site is built by H255 and A267.

The protein belongs to the metallo-dependent hydrolases superfamily. DHOase family. Class II DHOase subfamily. In terms of assembly, homodimer. Zn(2+) serves as cofactor.

It carries out the reaction (S)-dihydroorotate + H2O = N-carbamoyl-L-aspartate + H(+). It participates in pyrimidine metabolism; UMP biosynthesis via de novo pathway; (S)-dihydroorotate from bicarbonate: step 3/3. Its function is as follows. Catalyzes the reversible cyclization of carbamoyl aspartate to dihydroorotate. In Pectobacterium atrosepticum (strain SCRI 1043 / ATCC BAA-672) (Erwinia carotovora subsp. atroseptica), this protein is Dihydroorotase.